Reading from the N-terminus, the 263-residue chain is Chymotrypsinogen B2 (263 aa).

Positions 1–18 (MAFLWLLSCWALLGTTFG) are cleaved as a signal peptide. 5 disulfides stabilise this stretch: cysteine 19–cysteine 140, cysteine 60–cysteine 76, cysteine 154–cysteine 219, cysteine 186–cysteine 200, and cysteine 209–cysteine 238. The region spanning 34 to 261 (IVNGEDAVPG…LIPWVQKILA (228 aa)) is the Peptidase S1 domain. Catalysis depends on charge relay system residues histidine 75 and aspartate 120. Serine 213 (charge relay system) is an active-site residue.

Belongs to the peptidase S1 family.

The protein resides in the secreted. It localises to the extracellular space. It catalyses the reaction Preferential cleavage: Tyr-|-Xaa, Trp-|-Xaa, Phe-|-Xaa, Leu-|-Xaa.. The protein is Chymotrypsinogen B2 (CTRB2) of Homo sapiens (Human).